Consider the following 244-residue polypeptide: Small ribosomal subunit protein uS2 (244 aa).

Belongs to the universal ribosomal protein uS2 family.

In Endomicrobium trichonymphae, this protein is Small ribosomal subunit protein uS2.